The chain runs to 254 residues: 5-oxoprolinase subunit A (254 aa).

The protein belongs to the LamB/PxpA family. Forms a complex composed of PxpA, PxpB and PxpC.

The catalysed reaction is 5-oxo-L-proline + ATP + 2 H2O = L-glutamate + ADP + phosphate + H(+). Catalyzes the cleavage of 5-oxoproline to form L-glutamate coupled to the hydrolysis of ATP to ADP and inorganic phosphate. The protein is 5-oxoprolinase subunit A of Bacillus mycoides (strain KBAB4) (Bacillus weihenstephanensis).